We begin with the raw amino-acid sequence, 257 residues long: Major prion protein (257 aa).

An N-terminal signal peptide occupies residues 1–24 (MVKSHIGSWLLVLFVATWSDIGFC). The interval 25–234 (KKRPKPGGGW…ESEAYYQRGA (210 aa)) is interaction with GRB2, ERI3 and SYN1. The interval 27 to 114 (RPKPGGGWNT…KPSKPKTNMK (88 aa)) is disordered. 5 tandem repeats follow at residues 54–62 (PQGGGGWGQ), 63–70 (PHGGGWGQ), 71–78 (PHGGGWGQ), 79–86 (PHGGGWGQ), and 87–95 (PHGGGGWGQ). The interval 54-95 (PQGGGGWGQPHGGGWGQPHGGGWGQPHGGGWGQPHGGGGWGQ) is 5 X 8 AA tandem repeats of P-H-G-G-G-W-G-Q. The span at 55 to 101 (QGGGGWGQPHGGGWGQPHGGGWGQPHGGGWGQPHGGGGWGQGGGSHG) shows a compositional bias: gly residues. 12 residues coordinate Cu(2+): H64, G65, G66, H72, G73, G74, H80, G81, G82, H88, G90, and G91. Residues C183 and C218 are joined by a disulfide bond. N-linked (GlcNAc...) asparagine glycans are attached at residues N185 and N201. The GPI-anchor amidated alanine moiety is linked to residue A234. The propeptide at 235–257 (SAILFSPPPVILLISLLILLIVG) is removed in mature form.

The protein belongs to the prion family. In terms of assembly, monomer and homodimer. Has a tendency to aggregate into amyloid fibrils containing a cross-beta spine, formed by a steric zipper of superposed beta-strands. Soluble oligomers may represent an intermediate stage on the path to fibril formation. Copper binding may promote oligomerization. Interacts with GRB2, APP, ERI3/PRNPIP and SYN1. Mislocalized cytosolically exposed PrP interacts with MGRN1; this interaction alters MGRN1 subcellular location and causes lysosomal enlargement. Interacts with KIAA1191.

The protein resides in the cell membrane. The protein localises to the golgi apparatus. Its function is as follows. Its primary physiological function is unclear. Has cytoprotective activity against internal or environmental stresses. May play a role in neuronal development and synaptic plasticity. May be required for neuronal myelin sheath maintenance. May play a role in iron uptake and iron homeostasis. Soluble oligomers are toxic to cultured neuroblastoma cells and induce apoptosis (in vitro). Association with GPC1 (via its heparan sulfate chains) targets PRNP to lipid rafts. Also provides Cu(2+) or Zn(2+) for the ascorbate-mediated GPC1 deaminase degradation of its heparan sulfate side chains. The protein is Major prion protein (PRNP) of Mustela putorius furo (European domestic ferret).